The following is a 122-amino-acid chain: Large ribosomal subunit protein uL14 (122 aa).

Belongs to the universal ribosomal protein uL14 family. Part of the 50S ribosomal subunit. Forms a cluster with proteins L3 and L19. In the 70S ribosome, L14 and L19 interact and together make contacts with the 16S rRNA in bridges B5 and B8.

In terms of biological role, binds to 23S rRNA. Forms part of two intersubunit bridges in the 70S ribosome. The sequence is that of Large ribosomal subunit protein uL14 from Salinispora tropica (strain ATCC BAA-916 / DSM 44818 / JCM 13857 / NBRC 105044 / CNB-440).